Consider the following 142-residue polypeptide: Large ribosomal subunit protein uL13 (142 aa).

Belongs to the universal ribosomal protein uL13 family. As to quaternary structure, part of the 50S ribosomal subunit.

Functionally, this protein is one of the early assembly proteins of the 50S ribosomal subunit, although it is not seen to bind rRNA by itself. It is important during the early stages of 50S assembly. This Glaesserella parasuis serovar 5 (strain SH0165) (Haemophilus parasuis) protein is Large ribosomal subunit protein uL13.